A 171-amino-acid polypeptide reads, in one-letter code: 3-hydroxydecanoyl-[acyl-carrier-protein] dehydratase (171 aa).

The active site involves histidine 70.

The protein belongs to the thioester dehydratase family. FabA subfamily. Homodimer.

It is found in the cytoplasm. It catalyses the reaction a (3R)-hydroxyacyl-[ACP] = a (2E)-enoyl-[ACP] + H2O. The catalysed reaction is (3R)-hydroxydecanoyl-[ACP] = (2E)-decenoyl-[ACP] + H2O. The enzyme catalyses (2E)-decenoyl-[ACP] = (3Z)-decenoyl-[ACP]. Its pathway is lipid metabolism; fatty acid biosynthesis. Its function is as follows. Necessary for the introduction of cis unsaturation into fatty acids. Catalyzes the dehydration of (3R)-3-hydroxydecanoyl-ACP to E-(2)-decenoyl-ACP and then its isomerization to Z-(3)-decenoyl-ACP. Can catalyze the dehydratase reaction for beta-hydroxyacyl-ACPs with saturated chain lengths up to 16:0, being most active on intermediate chain length. This Pseudomonas putida (strain GB-1) protein is 3-hydroxydecanoyl-[acyl-carrier-protein] dehydratase.